We begin with the raw amino-acid sequence, 461 residues long: Cysteine--tRNA ligase (461 aa).

C28 is a Zn(2+) binding site. A 'HIGH' region motif is present at residues 30 to 40; that stretch reads ITIYDLCHIGH. Residues C209, H234, and E238 each contribute to the Zn(2+) site. The short motif at 266–270 is the 'KMSKS' region element; the sequence is KMSKS. K269 provides a ligand contact to ATP.

Belongs to the class-I aminoacyl-tRNA synthetase family. As to quaternary structure, monomer. It depends on Zn(2+) as a cofactor.

The protein localises to the cytoplasm. It catalyses the reaction tRNA(Cys) + L-cysteine + ATP = L-cysteinyl-tRNA(Cys) + AMP + diphosphate. This is Cysteine--tRNA ligase from Yersinia pseudotuberculosis serotype IB (strain PB1/+).